The chain runs to 69 residues: MTNNNNSNSNQLLVPGVQQAINQMKEEIANEFGVNLGPDSTSRANGSVGGEITKRLVRQAQSQMNGYTK.

The protein belongs to the alpha/beta-type SASP family.

Functionally, SASP are bound to spore DNA. They are double-stranded DNA-binding proteins that cause DNA to change to an a-like conformation. They protect the DNA backbone from chemical and enzymatic cleavage and are thus involved in dormant spore's high resistance to UV light. This Sporosarcina ureae protein is Small, acid-soluble spore protein 1 (Su-1).